Consider the following 80-residue polypeptide: Kappa-actitoxin-Avd4f (80 aa).

The signal sequence occupies residues 1–19 (MNKALFLCLVVLCAAVVFA). Positions 20–31 (AEDLQKAKHAPF) are excised as a propeptide. 3 disulfide bridges follow: Cys41–Cys76, Cys43–Cys69, and Cys59–Cys77.

This sequence belongs to the sea anemone type 3 (BDS) potassium channel toxin family. As to expression, moderately expressed in the ectodermal tissue from the distal and proximal tentacles, body wall, and oral disk.

The protein localises to the secreted. It localises to the nematocyst. In terms of biological role, blocks Kv3 voltage-gated potassium channels. Reduces blood pressure. In Anemonia viridis (Snakelocks anemone), this protein is Kappa-actitoxin-Avd4f.